A 473-amino-acid chain; its full sequence is MNWEMVIGLEVHIQLSTKSKLFSTSATKYGQHQNTQAAFLDLGLPGTLPIVNKEAIRKAVIFGLAVDAKISKDSFFARKNYFYPDLSKGYQISQSTNPIVQEGRLEIETSKGLKTIRIERAHLEEDAGKSVHGYIAGETGLDYNRAGTPLLEIVTYPDFRSAEEVVAYLKKLHQLVKHLGICDGNMQEGSFRCDVNLSIRPQGQAKFGTRAELKNINSFRFIDKAIEYEYARQVSVLESGGEVVQETRLYDADANETRSMRAKEDAFDYRYFPDPDLLPLVITDEYIESIKKQMPLKSEEREAVYREHLAEQEVEFLLSNLEIADYYDKVAVVIGYKPAYNWITVDLISTLNRAEKEFSSDVVPAEILLEIIANVQKDIISQANAKKVIAEYIDAPSAIEAIIEKLGLKQVSDEGMIRELVQGIIAANPQQAADFKAGKTKLMSFFVGQAMKASKGKANPKQVNQIVQEELNK.

Belongs to the GatB/GatE family. GatB subfamily. As to quaternary structure, heterotrimer of A, B and C subunits.

It catalyses the reaction L-glutamyl-tRNA(Gln) + L-glutamine + ATP + H2O = L-glutaminyl-tRNA(Gln) + L-glutamate + ADP + phosphate + H(+). It carries out the reaction L-aspartyl-tRNA(Asn) + L-glutamine + ATP + H2O = L-asparaginyl-tRNA(Asn) + L-glutamate + ADP + phosphate + 2 H(+). Allows the formation of correctly charged Asn-tRNA(Asn) or Gln-tRNA(Gln) through the transamidation of misacylated Asp-tRNA(Asn) or Glu-tRNA(Gln) in organisms which lack either or both of asparaginyl-tRNA or glutaminyl-tRNA synthetases. The reaction takes place in the presence of glutamine and ATP through an activated phospho-Asp-tRNA(Asn) or phospho-Glu-tRNA(Gln). The chain is Aspartyl/glutamyl-tRNA(Asn/Gln) amidotransferase subunit B from Francisella tularensis subsp. mediasiatica (strain FSC147).